The primary structure comprises 204 residues: Protease (204 aa).

Catalysis depends on residues histidine 53, aspartate 70, and cysteine 121.

This sequence belongs to the peptidase C5 family. As to quaternary structure, interacts with protease cofactor pVI-C; this interaction is necessary for protease activation.

Its subcellular location is the virion. It localises to the host nucleus. The catalysed reaction is Cleaves proteins of the adenovirus and its host cell at two consensus sites: -Yaa-Xaa-Gly-Gly-|-Xaa- and -Yaa-Xaa-Gly-Xaa-|-Gly- (in which Yaa is Met, Ile or Leu, and Xaa is any amino acid).. Requires DNA and protease cofactor for maximal activation. Inside nascent virions, becomes partially activated by binding to the viral DNA, allowing it to cleave the cofactor that binds to the protease and fully activates it. Actin, like the viral protease cofactor, seems to act as a cofactor in the cleavage of cytokeratin 18 and of actin itself. In terms of biological role, cleaves viral precursor proteins (pTP, pIIIa, pVI, pVII, pVIII, and pX) inside newly assembled particles giving rise to mature virions. Protease complexed to its cofactor slides along the viral DNA to specifically locate and cleave the viral precursors. Mature virions have a weakened organization compared to the unmature virions, thereby facilitating subsequent uncoating. Without maturation, the particle lacks infectivity and is unable to uncoat. Late in adenovirus infection, in the cytoplasm, may participate in the cytoskeleton destruction. Cleaves host cell cytoskeletal keratins K7 and K18. This chain is Protease, found in Porcine adenovirus A serotype 3 (PAdV-3).